The sequence spans 175 residues: Peptide deformylase (175 aa).

2 residues coordinate Fe cation: Cys96 and His138. The active site involves Glu139. His142 is a Fe cation binding site.

It belongs to the polypeptide deformylase family. Fe(2+) serves as cofactor.

It catalyses the reaction N-terminal N-formyl-L-methionyl-[peptide] + H2O = N-terminal L-methionyl-[peptide] + formate. Its function is as follows. Removes the formyl group from the N-terminal Met of newly synthesized proteins. Requires at least a dipeptide for an efficient rate of reaction. N-terminal L-methionine is a prerequisite for activity but the enzyme has broad specificity at other positions. The sequence is that of Peptide deformylase from Campylobacter jejuni subsp. jejuni serotype O:2 (strain ATCC 700819 / NCTC 11168).